The primary structure comprises 138 residues: Cysteine desulfuration protein SufE (138 aa).

C51 acts as the Cysteine persulfide intermediate in catalysis.

The protein belongs to the SufE family. In terms of assembly, homodimer. Interacts with SufS.

It is found in the cytoplasm. It participates in cofactor biosynthesis; iron-sulfur cluster biosynthesis. Its function is as follows. Participates in cysteine desulfuration mediated by SufS. Cysteine desulfuration mobilizes sulfur from L-cysteine to yield L-alanine and constitutes an essential step in sulfur metabolism for biosynthesis of a variety of sulfur-containing biomolecules. Functions as a sulfur acceptor for SufS, by mediating the direct transfer of the sulfur atom from the S-sulfanylcysteine of SufS, an intermediate product of cysteine desulfuration process. This chain is Cysteine desulfuration protein SufE, found in Escherichia fergusonii (strain ATCC 35469 / DSM 13698 / CCUG 18766 / IAM 14443 / JCM 21226 / LMG 7866 / NBRC 102419 / NCTC 12128 / CDC 0568-73).